Here is a 72-residue protein sequence, read N- to C-terminus: Aurein-2.2 (72 aa).

An N-terminal signal peptide occupies residues 1 to 22 (MAFLKKSLFLVLFLGLVSLSIC). The propeptide occupies 23 to 49 (EKEKRQNEEDEDENEAANHEEGSEEKR). Residues 27 to 47 (RQNEEDEDENEAANHEEGSEE) form a disordered region. The span at 38 to 47 (AANHEEGSEE) shows a compositional bias: basic and acidic residues. A Leucine amide modification is found at Leu-65. A propeptide spanning residues 69 to 72 (NDLE) is cleaved from the precursor.

In terms of processing, amidation is essential for antibacterial activity against Gram-positive bacteria. Expressed by the skin dorsal glands.

The protein localises to the secreted. It localises to the target cell membrane. Its function is as follows. Amphipathic alpha-helical antimicrobial peptide with weak to moderate activity against Gram-positive bacteria, and no activity against Gram-negative bacteria. Probably acts by disturbing membrane functions with its amphipathic structure. Strongly inhibits the formation of NO by neuronal nitric oxide synthase (nNOS) at micromolar concentrations. Acts by a non-competitive mechanism, probably by binding to calcium/calmodulin and as a consequence blocking calmodulin attachment to nNOS. In Ranoidea aurea (Green and golden bell frog), this protein is Aurein-2.2.